A 311-amino-acid polypeptide reads, in one-letter code: Methionyl-tRNA formyltransferase (311 aa).

112–115 (SLLP) is a (6S)-5,6,7,8-tetrahydrofolate binding site.

The protein belongs to the Fmt family.

It carries out the reaction L-methionyl-tRNA(fMet) + (6R)-10-formyltetrahydrofolate = N-formyl-L-methionyl-tRNA(fMet) + (6S)-5,6,7,8-tetrahydrofolate + H(+). Its function is as follows. Attaches a formyl group to the free amino group of methionyl-tRNA(fMet). The formyl group appears to play a dual role in the initiator identity of N-formylmethionyl-tRNA by promoting its recognition by IF2 and preventing the misappropriation of this tRNA by the elongation apparatus. This Bradyrhizobium diazoefficiens (strain JCM 10833 / BCRC 13528 / IAM 13628 / NBRC 14792 / USDA 110) protein is Methionyl-tRNA formyltransferase.